The sequence spans 189 residues: dTTP/UTP pyrophosphatase (189 aa).

D73 (proton acceptor) is an active-site residue.

Belongs to the Maf family. YhdE subfamily. Requires a divalent metal cation as cofactor.

The protein resides in the cytoplasm. It catalyses the reaction dTTP + H2O = dTMP + diphosphate + H(+). The enzyme catalyses UTP + H2O = UMP + diphosphate + H(+). Nucleoside triphosphate pyrophosphatase that hydrolyzes dTTP and UTP. May have a dual role in cell division arrest and in preventing the incorporation of modified nucleotides into cellular nucleic acids. The polypeptide is dTTP/UTP pyrophosphatase (Vibrio parahaemolyticus serotype O3:K6 (strain RIMD 2210633)).